The sequence spans 232 residues: LexA repressor (232 aa).

Residues 1–25 (MSDDSSDSTDAPGTSRSRDSGLTER) form a disordered region. Residues 16 to 25 (RSRDSGLTER) are compositionally biased toward basic and acidic residues. The H-T-H motif DNA-binding region spans 46 to 66 (IREIGDAVGLTSTSSVAHQLR). Catalysis depends on for autocatalytic cleavage activity residues Ser-156 and Lys-193.

It belongs to the peptidase S24 family. As to quaternary structure, homodimer.

It carries out the reaction Hydrolysis of Ala-|-Gly bond in repressor LexA.. Its function is as follows. Represses a number of genes involved in the response to DNA damage (SOS response), including recA and lexA. In the presence of single-stranded DNA, RecA interacts with LexA causing an autocatalytic cleavage which disrupts the DNA-binding part of LexA, leading to derepression of the SOS regulon and eventually DNA repair. The polypeptide is LexA repressor (Mycolicibacterium gilvum (strain PYR-GCK) (Mycobacterium gilvum (strain PYR-GCK))).